Consider the following 245-residue polypeptide: Folate receptor gamma (245 aa).

The first 22 residues, 1 to 22, serve as a signal peptide directing secretion; it reads MDMAWQMMQLLLLALVTAAGSA. 8 cysteine pairs are disulfide-bonded: Cys-37–Cys-65, Cys-57–Cys-105, Cys-66–Cys-109, Cys-89–Cys-175, Cys-96–Cys-146, Cys-135–Cys-209, Cys-139–Cys-189, and Cys-152–Cys-169. Positions 103 and 107 each coordinate folate. N-linked (GlcNAc...) asparagine glycosylation occurs at Asn-121. Folate contacts are provided by residues 124-128, 157-162, and Ser-196; these read WRKER and HKGWNW. Asn-161 is a glycosylation site (N-linked (GlcNAc...) asparagine). A glycan (N-linked (GlcNAc...) asparagine) is linked at Asn-201.

This sequence belongs to the folate receptor family. In terms of tissue distribution, spleen, thymus, bone marrow, ovarian carcinoma, and uterine carcinoma.

It is found in the secreted. Its function is as follows. Binds to folate and reduced folic acid derivatives and mediates delivery of 5-methyltetrahydrofolate to the interior of cells. Isoform Short does not bind folate. The polypeptide is Folate receptor gamma (FOLR3) (Homo sapiens (Human)).